The following is a 360-amino-acid chain: Peptide chain release factor 1 (360 aa).

Gln235 is modified (N5-methylglutamine).

It belongs to the prokaryotic/mitochondrial release factor family. In terms of processing, methylated by PrmC. Methylation increases the termination efficiency of RF1.

Its subcellular location is the cytoplasm. In terms of biological role, peptide chain release factor 1 directs the termination of translation in response to the peptide chain termination codons UAG and UAA. The sequence is that of Peptide chain release factor 1 from Cupriavidus pinatubonensis (strain JMP 134 / LMG 1197) (Cupriavidus necator (strain JMP 134)).